Here is a 192-residue protein sequence, read N- to C-terminus: Peptidyl-tRNA hydrolase (192 aa).

Y18 lines the tRNA pocket. H23 functions as the Proton acceptor in the catalytic mechanism. Residues F69, N71, and N117 each coordinate tRNA.

It belongs to the PTH family. Monomer.

The protein resides in the cytoplasm. It carries out the reaction an N-acyl-L-alpha-aminoacyl-tRNA + H2O = an N-acyl-L-amino acid + a tRNA + H(+). Functionally, hydrolyzes ribosome-free peptidyl-tRNAs (with 1 or more amino acids incorporated), which drop off the ribosome during protein synthesis, or as a result of ribosome stalling. Its function is as follows. Catalyzes the release of premature peptidyl moieties from peptidyl-tRNA molecules trapped in stalled 50S ribosomal subunits, and thus maintains levels of free tRNAs and 50S ribosomes. The protein is Peptidyl-tRNA hydrolase of Neisseria gonorrhoeae (strain ATCC 700825 / FA 1090).